A 608-amino-acid chain; its full sequence is MFDSKKFLANVTHDPGVYRMFDDKDTVIYVGKAKDLKKRLSSYFRANLSSKKTEALVASICRIETTITTSETEALLLEHNYIKTFQPRYNVLLRDDKSYPYILLTKERHPRITSHRGSKKVTGEYFGPYPHAGAVRETLSLLQKLFPIRQCENSVYANRSRPCLQYQIGRCLAPCVSGYVSDEEYNQQVGYARLFLQGKDQQVLDHLIGKMERASRALNFEEAARYRDQIQAVRSVIEKQFVSNERLDDMDIIAIAYKLGIACVHVLFIRQGKILGNRSYFPKVPENTSLSELTETFVGQFYLQAHQGRTIPNSIIVDRKLEEKAELESLLTDQAGRKVSIQDNIKGNKSKYLHLAQMNAQAALALQLKQSSLIHERYKELQQLLGIEKIHRMECFDISHTMGQQTIASCVVFNEEGPLKSDYRRFNIEGITGGDDYAAMEQALKKRYDKDLELEKIPDIIFIDGGKGQLNRALKVFHELQVKWDKNRPHLIGVAKGVDRKVGLETLIISKQEREINLPADSLALHLIQHIRDESHNHAISGHRKKRQKAFTQSGLETIEGVGAKRRQALLKYLGGMQGVKNATQDEIASVPGISVALAEKIFEALHH.

The GIY-YIG domain occupies 13 to 91 (HDPGVYRMFD…IKTFQPRYNV (79 aa)). A UVR domain is found at 201-236 (QQVLDHLIGKMERASRALNFEEAARYRDQIQAVRSV).

This sequence belongs to the UvrC family. In terms of assembly, interacts with UvrB in an incision complex.

It is found in the cytoplasm. In terms of biological role, the UvrABC repair system catalyzes the recognition and processing of DNA lesions. UvrC both incises the 5' and 3' sides of the lesion. The N-terminal half is responsible for the 3' incision and the C-terminal half is responsible for the 5' incision. This Mannheimia succiniciproducens (strain KCTC 0769BP / MBEL55E) protein is UvrABC system protein C.